A 73-amino-acid polypeptide reads, in one-letter code: Small ribosomal subunit protein bS18 (73 aa).

Belongs to the bacterial ribosomal protein bS18 family. Part of the 30S ribosomal subunit. Forms a tight heterodimer with protein bS6.

Its function is as follows. Binds as a heterodimer with protein bS6 to the central domain of the 16S rRNA, where it helps stabilize the platform of the 30S subunit. In Prochlorococcus marinus (strain SARG / CCMP1375 / SS120), this protein is Small ribosomal subunit protein bS18.